Reading from the N-terminus, the 310-residue chain is Deoxyribonuclease gamma (310 aa).

The N-terminal stretch at 1 to 25 (MSLYPASPYLASLLLFILALHGALS) is a signal peptide. The Bipartite nuclear localization signal signature appears at 40 to 56 (KKENHNAMDIIVKIIKR). Catalysis depends on residues E105 and H160. C199 and C236 are oxidised to a cystine. The not required for free DNA-nuclease activity but required for activity towards liposome-coated DNA stretch occupies residues 289 to 310 (SRAFTNSRKSVSLKKKKKGSRS). The Nuclear localization signal signature appears at 301-307 (LKKKKKG).

The protein belongs to the DNase I family. In terms of assembly, monomer. It depends on Ca(2+) as a cofactor. Mg(2+) serves as cofactor. In terms of processing, seems to be synthesized as an inactive precursor protein and converted into an active mature enzyme by removal of the N-terminal precursor peptide during apoptosis. Post-translationally, poly-ADP-ribosylated by PARP1. ADP-ribosylation negatively regulates enzymatic activity during apoptosis. In terms of tissue distribution, detected at high levels in spleen, lymph nodes, thymus and liver. Observed also in kidney and testis, but not in brain or heart.

Its subcellular location is the nucleus. It is found in the secreted. Inhibited by zinc. Has DNA hydrolytic activity. Is capable of both single- and double-stranded DNA cleavage, producing DNA fragments with 3'-OH ends. Can cleave chromatin to nucleosomal units and cleaves nucleosomal and liposome-coated DNA. Acts in internucleosomal DNA fragmentation (INDF) during apoptosis and necrosis. The role in apoptosis includes myogenic and neuronal differentiation, and BCR-mediated clonal deletion of self-reactive B cells. Is active on chromatin in apoptotic cell-derived membrane-coated microparticles and thus suppresses anti-DNA autoimmunity. Together with DNASE1, plays a key role in degrading neutrophil extracellular traps (NETs). NETs are mainly composed of DNA fibers and are released by neutrophils to bind pathogens during inflammation. Degradation of intravascular NETs by DNASE1 and DNASE1L3 is required to prevent formation of clots that obstruct blood vessels and cause organ damage following inflammation. The polypeptide is Deoxyribonuclease gamma (Dnase1l3) (Rattus norvegicus (Rat)).